We begin with the raw amino-acid sequence, 85 residues long: Small ribosomal subunit protein bS20 (85 aa).

It belongs to the bacterial ribosomal protein bS20 family.

Functionally, binds directly to 16S ribosomal RNA. The chain is Small ribosomal subunit protein bS20 from Borreliella afzelii (strain PKo) (Borrelia afzelii).